The sequence spans 451 residues: Zinc metalloproteinase nas-16 (451 aa).

Residues 70-273 (QVVTKLFSPQ…LTINTAYNCK (204 aa)) form the Peptidase M12A domain. Intrachain disulfides connect Cys-127/Cys-272, Cys-148/Cys-167, Cys-274/Cys-291, and Cys-296/Cys-305. The N-linked (GlcNAc...) asparagine glycan is linked to Asn-133. Residue His-175 coordinates Zn(2+). Glu-176 is an active-site residue. 2 residues coordinate Zn(2+): His-179 and His-185. The 40-residue stretch at 267–306 (NTAYNCKCPSELLCANGGYTNPSNCLECICPLGYGGVLCD) folds into the EGF-like domain. 2 N-linked (GlcNAc...) asparagine glycosylation sites follow: Asn-363 and Asn-438.

Requires Zn(2+) as cofactor.

It localises to the secreted. Metalloprotease. In Caenorhabditis elegans, this protein is Zinc metalloproteinase nas-16 (nas-16).